The primary structure comprises 413 residues: Peptidase T (413 aa).

H82 lines the Zn(2+) pocket. Residue D84 is part of the active site. Residue D145 coordinates Zn(2+). The Proton acceptor role is filled by E179. Positions 180, 202, and 384 each coordinate Zn(2+).

This sequence belongs to the peptidase M20B family. Zn(2+) serves as cofactor.

The protein resides in the cytoplasm. The enzyme catalyses Release of the N-terminal residue from a tripeptide.. Functionally, cleaves the N-terminal amino acid of tripeptides. The protein is Peptidase T of Latilactobacillus sakei subsp. sakei (strain 23K) (Lactobacillus sakei subsp. sakei).